Consider the following 416-residue polypeptide: Adenylosuccinate synthetase (416 aa).

GTP-binding positions include 13–19 and 41–43; these read GDEGKGK and GHT. Aspartate 14 functions as the Proton acceptor in the catalytic mechanism. Mg(2+) is bound by residues aspartate 14 and glycine 41. Residues 14–17, 39–42, threonine 126, arginine 140, glutamine 220, threonine 235, and arginine 299 contribute to the IMP site; these read DEGK and NAGH. Residue histidine 42 is the Proton donor of the active site. 295 to 301 is a binding site for substrate; the sequence is VSTGRKR. GTP contacts are provided by residues arginine 301, 327–329, and 405–407; these read KLD and STS.

Belongs to the adenylosuccinate synthetase family. In terms of assembly, homodimer. Mg(2+) serves as cofactor.

It is found in the cytoplasm. It carries out the reaction IMP + L-aspartate + GTP = N(6)-(1,2-dicarboxyethyl)-AMP + GDP + phosphate + 2 H(+). The protein operates within purine metabolism; AMP biosynthesis via de novo pathway; AMP from IMP: step 1/2. Its function is as follows. Plays an important role in the de novo pathway of purine nucleotide biosynthesis. Catalyzes the first committed step in the biosynthesis of AMP from IMP. In Campylobacter jejuni subsp. jejuni serotype O:23/36 (strain 81-176), this protein is Adenylosuccinate synthetase.